The following is a 426-amino-acid chain: Serine--tRNA ligase (426 aa).

Residue 233–235 participates in L-serine binding; the sequence is TAE. 264 to 266 contacts ATP; sequence RAE. E287 is an L-serine binding site. Residue 351–354 participates in ATP binding; the sequence is EISS. An L-serine-binding site is contributed by S387.

Belongs to the class-II aminoacyl-tRNA synthetase family. Type-1 seryl-tRNA synthetase subfamily. Homodimer. The tRNA molecule binds across the dimer.

The protein resides in the cytoplasm. It carries out the reaction tRNA(Ser) + L-serine + ATP = L-seryl-tRNA(Ser) + AMP + diphosphate + H(+). It catalyses the reaction tRNA(Sec) + L-serine + ATP = L-seryl-tRNA(Sec) + AMP + diphosphate + H(+). It participates in aminoacyl-tRNA biosynthesis; selenocysteinyl-tRNA(Sec) biosynthesis; L-seryl-tRNA(Sec) from L-serine and tRNA(Sec): step 1/1. Functionally, catalyzes the attachment of serine to tRNA(Ser). Is also able to aminoacylate tRNA(Sec) with serine, to form the misacylated tRNA L-seryl-tRNA(Sec), which will be further converted into selenocysteinyl-tRNA(Sec). This Clostridium novyi (strain NT) protein is Serine--tRNA ligase.